A 257-amino-acid polypeptide reads, in one-letter code: Acetylglutamate kinase (257 aa).

Residues 43-44, Arg-65, and Asn-157 contribute to the substrate site; that span reads GG. Residues 180–185 and 208–210 each bind ATP; these read DVSGIL and IIT.

The protein belongs to the acetylglutamate kinase family. ArgB subfamily. Homodimer.

The protein resides in the cytoplasm. It catalyses the reaction N-acetyl-L-glutamate + ATP = N-acetyl-L-glutamyl 5-phosphate + ADP. It functions in the pathway amino-acid biosynthesis; L-arginine biosynthesis; N(2)-acetyl-L-ornithine from L-glutamate: step 2/4. Catalyzes the ATP-dependent phosphorylation of N-acetyl-L-glutamate. The chain is Acetylglutamate kinase from Serratia proteamaculans (strain 568).